The following is a 98-amino-acid chain: MSLLDYFKSSKSKTASVAKERLQILVAHERYYRNKPSYLPQLQEELMQVIRKYVQVDQDAISVKFEQDDNQETLELNITLPDTQNPRNTQQDMIRNAL.

The protein belongs to the MinE family.

Functionally, prevents the cell division inhibition by proteins MinC and MinD at internal division sites while permitting inhibition at polar sites. This ensures cell division at the proper site by restricting the formation of a division septum at the midpoint of the long axis of the cell. The protein is Cell division topological specificity factor of Nitrosomonas eutropha (strain DSM 101675 / C91 / Nm57).